The primary structure comprises 1003 residues: Spheroidin (1003 aa).

Ser2 is subject to N-acetylserine; by host. Over residues 953–970 (DANSSSSDSCSDSSSSSE) the composition is skewed to low complexity. Residues 953-979 (DANSSSSDSCSDSSSSSESESDSDGCC) are disordered.

May form disulfide-bond-linked aggregates.

Functionally, major component of viral occlusion bodies, the protective complexes in which the virions are embedded in the cytoplasm of their insect hosts. In Amsacta (AmEPV), this protein is Spheroidin.